Consider the following 409-residue polypeptide: Arginine deiminase (409 aa).

The active-site Amidino-cysteine intermediate is the C399.

The protein belongs to the arginine deiminase family.

It is found in the cytoplasm. The enzyme catalyses L-arginine + H2O = L-citrulline + NH4(+). It functions in the pathway amino-acid degradation; L-arginine degradation via ADI pathway; carbamoyl phosphate from L-arginine: step 1/2. In Streptococcus pneumoniae (strain JJA), this protein is Arginine deiminase.